The primary structure comprises 336 residues: DNA repair protein Rad51 homolog (336 aa).

Residues 1–10 are compositionally biased toward polar residues; the sequence is MEKLTNVQAQ. The disordered stretch occupies residues 1-20; sequence MEKLTNVQAQQEEEEEEGPL. 124 to 131 serves as a coordination point for ATP; it reads GEFRCGKT.

It belongs to the RecA family. RAD51 subfamily. As to quaternary structure, interacts with Rrp6; the interaction is required for the recruitment of spn-A to the DNA-damage response foci. As to expression, highly expressed in ovaries.

The protein resides in the nucleus. It localises to the cytoplasm. Its function is as follows. Plays an important role in homologous strand exchange, a key step in DNA repair through homologous recombination (HR). Binds to single and double-stranded DNA and exhibits DNA-dependent ATPase activity. Underwinds duplex DNA. Spindle genes are required for each of the symmetry-breaking steps that generate polarity during egg axis formation; oocyte positioning at the posterior of the cyst to generate the first AP polarity and inhibition of gurken (grk) signaling to the follicle cell layer to polarize first the AP axis and then DV axis. May have a role in female meiosis. The chain is DNA repair protein Rad51 homolog (spn-A) from Drosophila melanogaster (Fruit fly).